Consider the following 55-residue polypeptide: ATP synthase F(0) complex subunit 8 (55 aa).

A helical transmembrane segment spans residues 8–24 (PWFMIMLMTWFTYSLLI).

It belongs to the ATPase protein 8 family. As to quaternary structure, component of the ATP synthase complex composed at least of ATP5F1A/subunit alpha, ATP5F1B/subunit beta, ATP5MC1/subunit c (homooctomer), MT-ATP6/subunit a, MT-ATP8/subunit 8, ATP5ME/subunit e, ATP5MF/subunit f, ATP5MG/subunit g, ATP5MK/subunit k, ATP5MJ/subunit j, ATP5F1C/subunit gamma, ATP5F1D/subunit delta, ATP5F1E/subunit epsilon, ATP5PF/subunit F6, ATP5PB/subunit b, ATP5PD/subunit d, ATP5PO/subunit OSCP. ATP synthase complex consists of a soluble F(1) head domain (subunits alpha(3) and beta(3)) - the catalytic core - and a membrane F(0) domain - the membrane proton channel (subunits c, a, 8, e, f, g, k and j). These two domains are linked by a central stalk (subunits gamma, delta, and epsilon) rotating inside the F1 region and a stationary peripheral stalk (subunits F6, b, d, and OSCP).

The protein resides in the mitochondrion membrane. Functionally, subunit 8, of the mitochondrial membrane ATP synthase complex (F(1)F(0) ATP synthase or Complex V) that produces ATP from ADP in the presence of a proton gradient across the membrane which is generated by electron transport complexes of the respiratory chain. ATP synthase complex consist of a soluble F(1) head domain - the catalytic core - and a membrane F(1) domain - the membrane proton channel. These two domains are linked by a central stalk rotating inside the F(1) region and a stationary peripheral stalk. During catalysis, ATP synthesis in the catalytic domain of F(1) is coupled via a rotary mechanism of the central stalk subunits to proton translocation. In vivo, can only synthesize ATP although its ATP hydrolase activity can be activated artificially in vitro. Part of the complex F(0) domain. This is ATP synthase F(0) complex subunit 8 from Coturnix japonica (Japanese quail).